The chain runs to 257 residues: MNISPKAIKVRNIWIGGTEPCICAPVVGEDDRKVLREAEEVCRKQPDLLEWRADFFRAIDDQERVLATANGLRNIAGEIPILFTIRSEREGGQPIPLNEAEVRRLIEAICRSGAIDLVDYELAYGERIADVRRMTEECSVWLVVSRHYFDGTPRKETLLADMRQAERYGADIAKVAVMPKSPEDVLVLLQATEEARRELAIPLITMAMGGLGAITRLAGWLFGSAVTFAVGNQSSAPGQIPIDDVRTVLSILQTYSR.

Residues 50 to 52 (EWR) and R86 each bind 3-dehydroquinate. H147 acts as the Proton donor/acceptor in catalysis. Residue K174 is the Schiff-base intermediate with substrate of the active site. R216, S235, and Q239 together coordinate 3-dehydroquinate.

The protein belongs to the type-I 3-dehydroquinase family. Homodimer.

It carries out the reaction 3-dehydroquinate = 3-dehydroshikimate + H2O. It participates in metabolic intermediate biosynthesis; chorismate biosynthesis; chorismate from D-erythrose 4-phosphate and phosphoenolpyruvate: step 3/7. In terms of biological role, involved in the third step of the chorismate pathway, which leads to the biosynthesis of aromatic amino acids. Catalyzes the cis-dehydration of 3-dehydroquinate (DHQ) and introduces the first double bond of the aromatic ring to yield 3-dehydroshikimate. This Geobacillus kaustophilus (strain HTA426) protein is 3-dehydroquinate dehydratase.